The primary structure comprises 186 residues: Hydra actinoporin-like toxin 5 (186 aa).

A signal peptide spans 1 to 20 (MLLYVCLVNLLLQSPSGVDS). The Cell attachment site motif lies at 158–160 (RDG).

The protein belongs to the actinoporin family. HALT subfamily. In terms of assembly, octamer or nonamer in membranes. Monomer in the soluble state. In vitro, interacts with folate receptor alpha (of target organism).

The protein localises to the nematocyst. Its subcellular location is the secreted. It localises to the target cell membrane. Pore-forming protein that forms hydrophilic pores and causes cytolysis. Compared to equinatoxin-2 (AC P61914), it reveals lower cytolysis activity (5-12-fold difference, tested on erythrocytes), a larger pore size (probably 2-3 nm) and different affinity to membrane lipids (100-fold lower affinity to sphingomyelin). Binds to sulfatides (SFT) as well as to the two sphingolipids, lysophosphatidic acid (LPA) and sphingosine-1-phosphate (S1P). It seems to bind more strongly to LPA than to S1P and SFT. Shows cytolytic activity on HeLa cells, with a different potency than its paralogs (from most potent to less potent: HALT-4&gt;HALT-6~HALT-1&gt;HALT-3&gt;HALT-7&gt;HALT-2). Pore formation is a multi-step process that involves specific recognition of membrane lipid by a protein aromatic residues rich region, firm binding to the membrane (mainly driven by hydrophobic interactions) accompanied by the transfer of the N-terminal region to the lipid-water interface and finally pore formation after oligomerization of monomers. In vitro, binds to the folate receptor alpha (FOLR1), a GPI-anchored membrane protein that plays a major role in the uptake of folate/folic acid into cells via endocytosis, suggesting a possible involvement of this receptor in the mechanism of HALT-1-induced cell lysis. In vivo, does not cause visible paralysis in larvae of the blowfly Sarcophaga faculata, the most common arthropod prey of Hydra. The protein is Hydra actinoporin-like toxin 5 of Hydra vulgaris (Hydra).